Reading from the N-terminus, the 180-residue chain is Mediator of RNA polymerase II transcription subunit 31 (180 aa).

Disordered regions lie at residues 1–24 (MQALPTILPPPPLPDDSEAPARTP) and 123–180 (WRVG…GQAL). Over residues 127–138 (KPAEDKQSEEKP) the composition is skewed to basic and acidic residues. Acidic residues predominate over residues 145-154 (LDDDEEEDEP).

The protein belongs to the Mediator complex subunit 31 family. In terms of assembly, component of the Mediator complex.

The protein resides in the nucleus. Its function is as follows. Component of the Mediator complex, a coactivator involved in the regulated transcription of nearly all RNA polymerase II-dependent genes. Mediator functions as a bridge to convey information from gene-specific regulatory proteins to the basal RNA polymerase II transcription machinery. Mediator is recruited to promoters by direct interactions with regulatory proteins and serves as a scaffold for the assembly of a functional preinitiation complex with RNA polymerase II and the general transcription factors. The chain is Mediator of RNA polymerase II transcription subunit 31 (SOH1) from Cryptococcus neoformans var. neoformans serotype D (strain B-3501A) (Filobasidiella neoformans).